Reading from the N-terminus, the 83-residue chain is RNA-binding protein Hfq (83 aa).

One can recognise a Sm domain in the interval 9–68 (DPFLNALRKERIPVSIYLVNGIKLQGQVESFDQFVILLKNTVSQMVYKHAISTVVPSRAL).

It belongs to the Hfq family. As to quaternary structure, homohexamer.

In terms of biological role, RNA chaperone that binds small regulatory RNA (sRNAs) and mRNAs to facilitate mRNA translational regulation in response to envelope stress, environmental stress and changes in metabolite concentrations. Also binds with high specificity to tRNAs. The protein is RNA-binding protein Hfq of Pseudoalteromonas atlantica (strain T6c / ATCC BAA-1087).